Here is a 161-residue protein sequence, read N- to C-terminus: MKYDTSELCDIYHEEVNVVEPLFSNFGGRTSFGGQITTVKCFEDNGLLFELLEENGRGRVLVIDGGGSVRRALINAELARLATQNEWEGIVVYGAVRQVDDLEEMDIGIQAMAAIPVGAASESIGESDIRVNFGGVTFFSGDHLYADNTGIILSEDPLDIE.

The protein belongs to the RraA family. In terms of assembly, homotrimer. Binds to both RNA-binding sites in the C-terminal region of Rne and to RhlB.

It localises to the cytoplasm. Functionally, globally modulates RNA abundance by binding to RNase E (Rne) and regulating its endonucleolytic activity. Can modulate Rne action in a substrate-dependent manner by altering the composition of the degradosome. Modulates RNA-binding and helicase activities of the degradosome. This chain is Regulator of ribonuclease activity A, found in Serratia proteamaculans (strain 568).